Here is a 313-residue protein sequence, read N- to C-terminus: T-box protein 37 (313 aa).

Positions 19–195 (IWEKFYPKTE…HNKFASGFRS (177 aa)) form a DNA-binding region, T-box. Positions 193-228 (FRSNGKRRLSSESENSENSPPKRSASAISSLTPPAI) are disordered.

It is found in the nucleus. In terms of biological role, transcription factor. Required for mesodermal induction, acting redundantly with transcription factor tbx-38. Together with tbx-38, acts by inducing cell fates in the AB lineage, thereby playing a role in development of the anterior pharynx. The protein is T-box protein 37 (tbx-37) of Caenorhabditis elegans.